Reading from the N-terminus, the 141-residue chain is Large ribosomal subunit protein uL11 (141 aa).

Belongs to the universal ribosomal protein uL11 family. Part of the ribosomal stalk of the 50S ribosomal subunit. Interacts with L10 and the large rRNA to form the base of the stalk. L10 forms an elongated spine to which L12 dimers bind in a sequential fashion forming a multimeric L10(L12)X complex. Post-translationally, one or more lysine residues are methylated.

In terms of biological role, forms part of the ribosomal stalk which helps the ribosome interact with GTP-bound translation factors. In Thermotoga sp. (strain RQ2), this protein is Large ribosomal subunit protein uL11.